A 99-amino-acid chain; its full sequence is Large ribosomal subunit protein eL21 (99 aa).

Belongs to the eukaryotic ribosomal protein eL21 family.

The protein is Large ribosomal subunit protein eL21 of Pyrobaculum calidifontis (strain DSM 21063 / JCM 11548 / VA1).